Reading from the N-terminus, the 246-residue chain is Ribonuclease PH (246 aa).

Residues Arg-91 and 129 to 131 (GTR) each bind phosphate.

Belongs to the RNase PH family. Homohexameric ring arranged as a trimer of dimers.

It catalyses the reaction tRNA(n+1) + phosphate = tRNA(n) + a ribonucleoside 5'-diphosphate. Its function is as follows. Phosphorolytic 3'-5' exoribonuclease that plays an important role in tRNA 3'-end maturation. Removes nucleotide residues following the 3'-CCA terminus of tRNAs; can also add nucleotides to the ends of RNA molecules by using nucleoside diphosphates as substrates, but this may not be physiologically important. Probably plays a role in initiation of 16S rRNA degradation (leading to ribosome degradation) during starvation. This chain is Ribonuclease PH, found in Paraburkholderia phymatum (strain DSM 17167 / CIP 108236 / LMG 21445 / STM815) (Burkholderia phymatum).